Reading from the N-terminus, the 404-residue chain is Exodeoxyribonuclease 7 large subunit (404 aa).

It belongs to the XseA family. As to quaternary structure, heterooligomer composed of large and small subunits.

It localises to the cytoplasm. The catalysed reaction is Exonucleolytic cleavage in either 5'- to 3'- or 3'- to 5'-direction to yield nucleoside 5'-phosphates.. Functionally, bidirectionally degrades single-stranded DNA into large acid-insoluble oligonucleotides, which are then degraded further into small acid-soluble oligonucleotides. The sequence is that of Exodeoxyribonuclease 7 large subunit from Mesoplasma florum (strain ATCC 33453 / NBRC 100688 / NCTC 11704 / L1) (Acholeplasma florum).